A 112-amino-acid chain; its full sequence is Nitrogen regulatory protein GlnK2 (112 aa).

ADP-binding positions include Thr29, 37–39 (GVQ), Val64, and 87–90 (GDGK). ATP contacts are provided by residues Thr29, 37–39 (GVQ), Val64, and 87–90 (GDGK).

This sequence belongs to the P(II) protein family. Homotrimer. Interacts and forms a complex with Amt2.

It is found in the cytoplasm. Functionally, involved in the regulation of nitrogen metabolism. Regulates the activity of its targets by protein-protein interaction in response to the nitrogen status of the cell. Regulates the activity of the ammonia channel Amt2 via direct interaction. The polypeptide is Nitrogen regulatory protein GlnK2 (Methanocaldococcus jannaschii (strain ATCC 43067 / DSM 2661 / JAL-1 / JCM 10045 / NBRC 100440) (Methanococcus jannaschii)).